Here is a 264-residue protein sequence, read N- to C-terminus: Protein-lysine methyltransferase METTL21C (264 aa).

Over residues 1-10 the composition is skewed to polar residues; it reads MDVCLSSAQQ. A disordered region spans residues 1 to 46; that stretch reads MDVCLSSAQQPGRRGEGLSSPGGWLEAEKKGAPQKDSTGGVLEESN. S-adenosyl-L-methionine is bound by residues W92, 120-122, D141, W172, and S193; that span reads GAG.

This sequence belongs to the methyltransferase superfamily. METTL21 family. In terms of assembly, interacts with members of the heat shock protein 70 families; these proteins may possibly be methylation substrates for the enzyme.

The protein localises to the nucleus. It localises to the cytoplasm. The catalysed reaction is L-lysyl-[protein] + S-adenosyl-L-methionine = N(6)-methyl-L-lysyl-[protein] + S-adenosyl-L-homocysteine + H(+). It catalyses the reaction N(6)-methyl-L-lysyl-[protein] + S-adenosyl-L-methionine = N(6),N(6)-dimethyl-L-lysyl-[protein] + S-adenosyl-L-homocysteine + H(+). It carries out the reaction N(6),N(6)-dimethyl-L-lysyl-[protein] + S-adenosyl-L-methionine = N(6),N(6),N(6)-trimethyl-L-lysyl-[protein] + S-adenosyl-L-homocysteine + H(+). In terms of biological role, protein-lysine N-methyltransferase using S-adenosyl-L-methionine as methyl donor. Mono-di and trimethylates 'Lys-943' of AARS1. The chain is Protein-lysine methyltransferase METTL21C from Homo sapiens (Human).